We begin with the raw amino-acid sequence, 2208 residues long: RNA-directed RNA polymerase L (2208 aa).

An endonuclease region spans residues 26 to 284 (KEALLSQVEV…SHAGTTVPEC (259 aa)). Residues Glu51, Asp89, and Glu102 each coordinate Mn(2+). Lys115 is a catalytic residue. One can recognise a RdRp catalytic domain in the interval 1172–1370 (CDMKMAVNNG…FLSSKLNKFV (199 aa)). Residue Asp1330 coordinates Mg(2+).

This sequence belongs to the Bunyavirales RNA polymerase family. As to quaternary structure, homomultimer; the oligomeric structure is essential for the polymerase activity. Interacts with nucleoprotein N. Interacts with protein Z; this interaction inhibits viral transcription and replication, Z partially blocks the product exit tunnel for the releasing nascent RNA product. Mn(2+) serves as cofactor. The cofactor is Mg(2+).

The protein resides in the virion. It is found in the host cytoplasm. It catalyses the reaction RNA(n) + a ribonucleoside 5'-triphosphate = RNA(n+1) + diphosphate. Its function is as follows. RNA-dependent RNA polymerase, which is responsible for the replication and transcription of the viral RNA genome using antigenomic RNA as an intermediate. During transcription, synthesizes subgenomic RNAs and assures their capping by a cap-snatching mechanism, which involves the endonuclease activity cleaving the host capped pre-mRNAs. These short capped RNAs are then used as primers for viral transcription. The 3'-end of subgenomic mRNAs molecules are heterogeneous and not polyadenylated. The replicase function is to direct synthesis of antigenomic and genomic RNA which are encapsidated and non capped. As a consequence of the use of the same enzyme for both transcription and replication, these mechanisms need to be well coordinated. These processes may be regulated by proteins N and Z in a dose-dependent manner. Z protein inhibits the viral polymerase L und thus the viral transcription and RNA synthesis. The chain is RNA-directed RNA polymerase L from Hylaeamys megacephalus (Large-headed rice rat).